Here is a 941-residue protein sequence, read N- to C-terminus: MTVDYKNTLNLPETSFPMRGDLAKREPDMLKNWYEKNLYQKIRKASKGKKSFILHDGPPYANGNIHIGHAVNKILKDIIIKSKTALGFDSPYIPGWDCHGLPIELKVEGLVGKPNEKISAAEFRQKCREYAAEQVEGQKKDFIRLGVLGDWDNPYLTMNFDTEANIIRTLGKVIENGHLYKGSKPVHWCLDCGSSLAEAEVEYEDKVSPSIYVRFPAESADEIEAKFSAQGRGQGKLSAIIWTTTPWTMPSNRAIAVNADLEYNLVQLGDERVILAAELVESVAKAVGIEHIEILGSVKGDDLELSRFHHPFYDFTVPVILGDHVTTDGGTGLVHTAPDHGLDDFIVGKQYDLPMAGLVSNDGKFISTTEFFAGKGVFEANPLVIEKLQEVGNLLKVEKIKHSYPHCWRHKTPIIFRATPQWFIGMETQGLRQQALGEIKQVRWIPDWGQARIEKMVENRPDWCISRQRTWGVPMTLFVHKETEELHPRTLDLLEEVAKRVERAGIQAWWDLDEKELLGADAETYRKVPDTLDVWFDSGSTYSSVVANRPEFNGQNIDMYLEGSDQHRGWFMSSLMLSTATDSKAPYKQVLTHGFTVDGQGRKMSKSIGNIVTPQEVMDKFGGDILRLWVASTDYTGEMTVSDEILKRAADSYRRIRNTARFLLANLNGFDPKRDLVKPEEMVSLDRWAVACALDAQNEIKDAYDNYQFHTVVQRLMRFCSVEMGSFYLDIIKDRQYTTKADSLARRSCQTALWHIAEALVRWMAPILSFTADEIWQHLPQTESARAEFVFTEEFYQGLFGLGEDEKLDDAYWQQLIKVRSEVNRVLEISRNNKEIGGGLEAEVTVYANDEYRALLAQLGNELRFVLITSKVDIKSLSEKPADLADSELEGIAVSVTRSNAEKCPRCWHYSDEIGVSPEHPTLCARCVENVVGNGEVRHFA.

The 'HIGH' region signature appears at proline 59–histidine 69. Glutamate 562 is a binding site for L-isoleucyl-5'-AMP. Positions lysine 603 to serine 607 match the 'KMSKS' region motif. An ATP-binding site is contributed by lysine 606. Residues cysteine 904, cysteine 907, cysteine 924, and cysteine 927 each coordinate Zn(2+).

It belongs to the class-I aminoacyl-tRNA synthetase family. IleS type 1 subfamily. As to quaternary structure, monomer. Zn(2+) is required as a cofactor.

The protein resides in the cytoplasm. The enzyme catalyses tRNA(Ile) + L-isoleucine + ATP = L-isoleucyl-tRNA(Ile) + AMP + diphosphate. In terms of biological role, catalyzes the attachment of isoleucine to tRNA(Ile). As IleRS can inadvertently accommodate and process structurally similar amino acids such as valine, to avoid such errors it has two additional distinct tRNA(Ile)-dependent editing activities. One activity is designated as 'pretransfer' editing and involves the hydrolysis of activated Val-AMP. The other activity is designated 'posttransfer' editing and involves deacylation of mischarged Val-tRNA(Ile). This Haemophilus influenzae (strain PittGG) protein is Isoleucine--tRNA ligase.